Consider the following 68-residue polypeptide: DNA-directed RNA polymerase subunit omega (68 aa).

The protein belongs to the RNA polymerase subunit omega family. In terms of assembly, the RNAP catalytic core consists of 2 alpha, 1 beta, 1 beta' and 1 omega subunit. When a sigma factor is associated with the core the holoenzyme is formed, which can initiate transcription.

The enzyme catalyses RNA(n) + a ribonucleoside 5'-triphosphate = RNA(n+1) + diphosphate. In terms of biological role, promotes RNA polymerase assembly. Latches the N- and C-terminal regions of the beta' subunit thereby facilitating its interaction with the beta and alpha subunits. The chain is DNA-directed RNA polymerase subunit omega from Desulfitobacterium hafniense (strain DSM 10664 / DCB-2).